Reading from the N-terminus, the 329-residue chain is MAELFWFEKYRPRSFDEVVDLEEVKSRLREFVKSGNMPHLLFYGPPGTGKTTMALVLARELYGEYWRENTLELNASDERGINVIRERVKEFARTAPVGKAPFKLVILDEADNMTSDAQQALRRIMEIYAQNTRFILLANYVSRIIDPIISRCAVFRFSPMPRHLMAERLKYIAKSEGVEVKEDAIDLIYELSEGDMRKAINILQVAAATNKIVDRNVVAAAAAAIRPTDIVELFNLALSGDYLKAREKMRELMYVKGVAGVDFIRAFQRELIRMSLDDETKAEVAELLADVDYRLTQGADEEIQLSYFLAKLGSIGKKIRAASLPPKKR.

44–51 (GPPGTGKT) is a binding site for ATP.

The protein belongs to the activator 1 small subunits family. RfcS subfamily. As to quaternary structure, heteromultimer composed of small subunits (RfcS) and large subunits (RfcL).

Its function is as follows. Part of the RFC clamp loader complex which loads the PCNA sliding clamp onto DNA. In Pyrobaculum islandicum (strain DSM 4184 / JCM 9189 / GEO3), this protein is Replication factor C small subunit 1.